Here is a 375-residue protein sequence, read N- to C-terminus: Methylthioribose-1-phosphate isomerase (375 aa).

Residues 53 to 55 (RGA), Arg90, and Gln202 each bind substrate. The Proton donor role is filled by Asp243. 253-254 (NK) lines the substrate pocket.

It belongs to the eIF-2B alpha/beta/delta subunits family. MtnA subfamily.

The catalysed reaction is 5-(methylsulfanyl)-alpha-D-ribose 1-phosphate = 5-(methylsulfanyl)-D-ribulose 1-phosphate. Its pathway is amino-acid biosynthesis; L-methionine biosynthesis via salvage pathway; L-methionine from S-methyl-5-thio-alpha-D-ribose 1-phosphate: step 1/6. Catalyzes the interconversion of methylthioribose-1-phosphate (MTR-1-P) into methylthioribulose-1-phosphate (MTRu-1-P). The protein is Methylthioribose-1-phosphate isomerase of Rhodospirillum centenum (strain ATCC 51521 / SW).